The following is a 307-amino-acid chain: Protoheme IX farnesyltransferase (307 aa).

The next 9 membrane-spanning stretches (helical) occupy residues 33-53 (IGIV…AFYF), 62-82 (LHIV…SCSI), 111-131 (RVLW…LMTT), 132-152 (VTAA…YTLW), 159-179 (LNTV…WTAV), 185-205 (IVPL…FLAL), 229-249 (MTKR…FYLF), 251-271 (LGIP…LLGL), and 287-307 (FVYS…ATIW).

It belongs to the UbiA prenyltransferase family. Protoheme IX farnesyltransferase subfamily. In terms of assembly, interacts with CtaA.

The protein localises to the cell membrane. The catalysed reaction is heme b + (2E,6E)-farnesyl diphosphate + H2O = Fe(II)-heme o + diphosphate. It participates in porphyrin-containing compound metabolism; heme O biosynthesis; heme O from protoheme: step 1/1. Converts heme B (protoheme IX) to heme O by substitution of the vinyl group on carbon 2 of heme B porphyrin ring with a hydroxyethyl farnesyl side group. The chain is Protoheme IX farnesyltransferase from Geobacillus thermodenitrificans (strain NG80-2).